The following is a 309-amino-acid chain: Putative rhizopine-binding protein (309 aa).

An N-terminal signal peptide occupies residues 1–20; it reads MKKFIIGIAAAVLVSTAAHA.

This sequence belongs to the bacterial solute-binding protein 2 family.

It localises to the periplasm. Functionally, involved in rhizopine (L-3-O-methyl-scyllo-inosamine) catabolism. Could be involved in its high affinity transport. This is Putative rhizopine-binding protein (mocB) from Rhizobium meliloti (Ensifer meliloti).